A 386-amino-acid chain; its full sequence is Alcohol dehydrogenase-like 2 (386 aa).

8 residues coordinate Zn(2+): Cys51, Thr53, His74, Cys104, Cys107, Cys110, Cys118, and Cys183. Residues Thr53 and His74 each contribute to the an alcohol site. Position 53 (Thr53) interacts with NAD(+). Residues 208 to 213 (GLGAVG), Asp232, Lys237, 302 to 304 (LGM), Phe329, and Arg379 each bind NAD(+).

Belongs to the zinc-containing alcohol dehydrogenase family. Class-III subfamily. As to quaternary structure, homodimer. The cofactor is Zn(2+).

The protein resides in the cytoplasm. It catalyses the reaction a primary alcohol + NAD(+) = an aldehyde + NADH + H(+). It carries out the reaction a secondary alcohol + NAD(+) = a ketone + NADH + H(+). In Arabidopsis thaliana (Mouse-ear cress), this protein is Alcohol dehydrogenase-like 2.